A 1798-amino-acid chain; its full sequence is Focadhesin (1798 aa).

The residue at position 816 (K816) is an N6-acetyllysine.

As to quaternary structure, interacts with VCL. Expressed by glial and neuronal cells in brain.

Its subcellular location is the cell junction. The protein localises to the focal adhesion. It localises to the cytoplasm. The protein resides in the cytosol. Functionally, required for the maintenance of SKIC2 and SKIC3 proteostatic levels in the liver. May be involved in the regulation of RNA degradation by the exosome complex. Potential tumor suppressor in gliomas. This is Focadhesin (Focad) from Mus musculus (Mouse).